The sequence spans 225 residues: Cytidylate kinase (225 aa).

11–19 lines the ATP pocket; that stretch reads GPAAAGKST.

This sequence belongs to the cytidylate kinase family. Type 1 subfamily.

The protein localises to the cytoplasm. The catalysed reaction is CMP + ATP = CDP + ADP. It catalyses the reaction dCMP + ATP = dCDP + ADP. In Bacillus cereus (strain G9842), this protein is Cytidylate kinase.